Here is an 82-residue protein sequence, read N- to C-terminus: Myrmicitoxin(1)-Pm3a (82 aa).

Residues 1–23 (MEIPKLLYIAVIAIGLSGSLTCA) form the signal peptide. A propeptide spanning residues 24-59 (TPLANPLADPEAEAEAKATAEATAEAIAEALAEPEP) is cleaved from the precursor. Leucine 81 carries the post-translational modification Leucine amide.

Belongs to the formicidae venom clade 1 family. As to expression, expressed by the venom gland.

The protein resides in the secreted. Functionally, toxin that causes a slowly developing temporary paralysis when intrathoracically injected into insects (blowflies). Does not cause spontaneous nocifensive behaviors by intraplantar injection in mice. The protein is Myrmicitoxin(1)-Pm3a of Pogonomyrmex maricopa (Maricopa harvester ant).